The chain runs to 203 residues: Large ribosomal subunit protein uL3 (203 aa).

The protein belongs to the universal ribosomal protein uL3 family. As to quaternary structure, part of the 50S ribosomal subunit. Forms a cluster with proteins L14 and L19.

In terms of biological role, one of the primary rRNA binding proteins, it binds directly near the 3'-end of the 23S rRNA, where it nucleates assembly of the 50S subunit. This is Large ribosomal subunit protein uL3 from Christiangramia forsetii (strain DSM 17595 / CGMCC 1.15422 / KT0803) (Gramella forsetii).